A 201-amino-acid polypeptide reads, in one-letter code: Pyridoxal 5'-phosphate synthase subunit PdxT (201 aa).

Position 50–52 (50–52 (GES)) interacts with L-glutamine. The Nucleophile role is filled by cysteine 82. Residues arginine 111 and 139–140 (IR) contribute to the L-glutamine site. Active-site charge relay system residues include histidine 180 and glutamate 182.

Belongs to the glutaminase PdxT/SNO family. In the presence of PdxS, forms a dodecamer of heterodimers. Only shows activity in the heterodimer.

The enzyme catalyses aldehydo-D-ribose 5-phosphate + D-glyceraldehyde 3-phosphate + L-glutamine = pyridoxal 5'-phosphate + L-glutamate + phosphate + 3 H2O + H(+). It carries out the reaction L-glutamine + H2O = L-glutamate + NH4(+). It participates in cofactor biosynthesis; pyridoxal 5'-phosphate biosynthesis. Its function is as follows. Catalyzes the hydrolysis of glutamine to glutamate and ammonia as part of the biosynthesis of pyridoxal 5'-phosphate. The resulting ammonia molecule is channeled to the active site of PdxS. This Nocardioides sp. (strain ATCC BAA-499 / JS614) protein is Pyridoxal 5'-phosphate synthase subunit PdxT.